Consider the following 282-residue polypeptide: uncharacterized protein (282 aa).

This is an uncharacterized protein from Rickettsia conorii (strain ATCC VR-613 / Malish 7).